A 449-amino-acid polypeptide reads, in one-letter code: Dynein axonemal assembly factor 3 (449 aa).

Belongs to the DNAAF3 family.

The protein localises to the cytoplasm. It localises to the dynein axonemal particle. Its function is as follows. Required for the assembly of axonemal inner and outer dynein arms. Involved in preassembly of dyneins into complexes before their transport into cilia. The sequence is that of Dynein axonemal assembly factor 3 (dnaaf3) from Xenopus tropicalis (Western clawed frog).